Reading from the N-terminus, the 7570-residue chain is Dystonin (7570 aa).

2 Calponin-homology (CH) domains span residues 35 to 138 and 151 to 255; these read KVQK…LHFQ and MSAK…DAFP. The interval 35–252 is actin-binding; sequence KVQKKTFTKW…VITYVSSLYD (218 aa). Residues Leu-135, Lys-184, Ser-236, and Ser-237 each carry the phosphoserine modification. Spectrin repeat units follow at residues 602 to 699 and 701 to 802; these read EINM…RHLD and LHNF…QHIK. The 58-residue stretch at 887 to 944 folds into the SH3 domain; it reads KTSIPIKAICDYRQIEITIYKDDECVLANNSHRAKWKVISPTGNEAMVPSVCFTVPPP. 2 Spectrin repeats span residues 1293 to 1422 and 1440 to 1540; these read KYYR…KFAG and KEHV…QESQ. Ser-1382 is subject to Phosphoserine. The Nuclear localization signal; in isoform 6 signature appears at 1383–1389; sequence PVKRRRM. At Glu-1565 the chain carries Phosphoserine. Plectin repeat units lie at residues 1584–1626, 1660–1703, 1774–1817, 1818–1855, and 1856–1891; these read IRLL…QLKE, KVLE…LERQ, RLLS…LTYQ, VQTG…LEAQ, and RGYV…KILN. Phosphoserine is present on Ser-2229. 3 disordered regions span residues 2317 to 2346, 2383 to 2441, and 2585 to 2616; these read SNTS…IEEY, LLND…DETA, and DYIY…GKPR. Acidic residues predominate over residues 2336–2345; that stretch reads DKEDESEIEE. Residues 2385–2394 are compositionally biased toward low complexity; sequence NDQQNNTGTD. 3 stretches are compositionally biased toward acidic residues: residues 2395–2412, 2430–2439, and 2591–2605; these read TDSD…DDDH, YDTLQEENDE, and NDQD…DEEG. Position 2919 is a phosphoserine (Ser-2919). The disordered stretch occupies residues 3190–3221; sequence EASTVPSDSQMSDSSGVSPMTNSSELKPESRD. The segment covering 3192–3209 has biased composition (low complexity); that stretch reads STVPSDSQMSDSSGVSPM. 28 Spectrin repeats span residues 3395 to 3501, 3643 to 3752, 3926 to 4040, 4047 to 4153, 4160 to 4259, 4269 to 4368, 4516 to 4621, 4628 to 4732, 4742 to 4842, 4849 to 4951, 4958 to 5058, 5068 to 5167, 5174 to 5277, 5284 to 5388, 5395 to 5497, 5504 to 5715, 5831 to 5933, 5941 to 6041, 6048 to 6154, 6161 to 6263, 6270 to 6373, 6380 to 6482, 6489 to 6591, 6598 to 6700, 6707 to 6810, 6817 to 6918, 6925 to 7027, and 7037 to 7167; these read LQHT…KQIM, QEYK…KELD, EKFD…NNLK, QHYE…EKLQ, LSVQ…ETLA, ELFE…EAVT, QKAQ…QKLE, TQFQ…DWID, QSLL…QHLQ, HQFQ…NKLK, LKYK…FCLE, QEVS…SFLE, GHFQ…EQVE, EEFY…AQLQ, GRFQ…RQLE, QQFH…KTLE, QQFD…LQLE, QFWE…VALD, TQFH…AKLL, EKFW…DKLE, VQYQ…HKLE, GQFQ…QQLD, KGFH…TKLE, MEFH…RSLD, KQFH…NKLE, GQFT…TRLE, EEFH…QRLA, and QELL…RKLN. Residue Ser-3968 is modified to Phosphoserine. Ser-4749 carries the phosphoserine modification. Lys-5470 is covalently cross-linked (Glycyl lysine isopeptide (Lys-Gly) (interchain with G-Cter in ubiquitin)). EF-hand domains lie at 7197-7232 and 7233-7268; these read HKKS…SKFP and TSRL…NKDA. Ca(2+) is bound by residues Asp-7210, Asp-7212, Asp-7214, Lys-7216, Glu-7221, Asp-7246, Asp-7248, Asp-7250, Tyr-7252, and Glu-7257. The 79-residue stretch at 7273–7351 folds into the GAR domain; that stretch reads TDADKIEDEV…EFLVKNDPCR (79 aa). 3 disordered regions span residues 7358–7379, 7395–7452, and 7481–7570; these read KMLR…AKGR, SQGM…SKLR, and QFAD…SSKR. Residues 7362 to 7374 show a composition bias toward polar residues; that stretch reads SESNSSITTTQPT. Composition is skewed to low complexity over residues 7411–7441 and 7490–7504; these read SSRG…TTTP and SRPG…GSRA. Ser-7432 bears the Phosphoserine mark. A phosphoserine mark is found at Ser-7510, Ser-7513, and Ser-7525. Polar residues predominate over residues 7519-7535; the sequence is EIQSVCSDVETVPQTHR. A Microtubule tip localization signal motif is present at residues 7550–7553; sequence SKIP.

As to quaternary structure, homodimer. Isoform 1 interacts (via N-terminus) with PLEC (via N-terminus). Interacts with the neuronal intermediate filament protein, PRPH. Interacts with DES. Interacts with SYNE3. Isoform 1 and isoform 6 can homodimerize (via N-terminus). Isoform 1 interacts (via N-terminus) with ACTN2. Isoform 1 interacts (via N-terminus) with PLEC (via N-terminus). Isoform 3 interacts (via N-terminus) with COL17A1 (via cytoplasmic region). Isoform 3 interacts (via N-terminus) with ITGB4 isoform beta-4a (via cytoplasmic region). Isoform 3 interacts (via N-terminus) with ERBIN (via C-terminus). Isoform 3 associates (via C-terminal) with KRT5-KRT14 (via rod region) intermediate filaments of keratins. Interacts with MAPRE1; probably required for targeting to the growing microtubule plus ends. Interacts with TMIGD2. Isoform 9 interacts with TMEM108. As to expression, isoform 1 is expressed in myoblasts (at protein level). Isoform 3 is expressed in the skin. Isoform 6 is expressed in the brain. Highly expressed in skeletal muscle and cultured keratinocytes.

The protein resides in the cytoplasm. It is found in the cytoskeleton. The protein localises to the stress fiber. Its subcellular location is the cell projection. It localises to the axon. The protein resides in the myofibril. It is found in the sarcomere. The protein localises to the z line. Its subcellular location is the h zone. It localises to the cell junction. The protein resides in the hemidesmosome. It is found in the nucleus. The protein localises to the nucleus envelope. Its subcellular location is the membrane. It localises to the endoplasmic reticulum membrane. The protein resides in the cell cortex. It is found in the cell membrane. Cytoskeletal linker protein. Acts as an integrator of intermediate filaments, actin and microtubule cytoskeleton networks. Required for anchoring either intermediate filaments to the actin cytoskeleton in neural and muscle cells or keratin-containing intermediate filaments to hemidesmosomes in epithelial cells. The proteins may self-aggregate to form filaments or a two-dimensional mesh. Regulates the organization and stability of the microtubule network of sensory neurons to allow axonal transport. Mediates docking of the dynein/dynactin motor complex to vesicle cargos for retrograde axonal transport through its interaction with TMEM108 and DCTN1. Functionally, plays a structural role in the assembly of hemidesmosomes of epithelial cells; anchors keratin-containing intermediate filaments to the inner plaque of hemidesmosomes. Required for the regulation of keratinocyte polarity and motility; mediates integrin ITGB4 regulation of RAC1 activity. Its function is as follows. Required for bundling actin filaments around the nucleus. In terms of biological role, regulates the organization and stability of the microtubule network of sensory neurons to allow axonal transport. In Homo sapiens (Human), this protein is Dystonin.